The following is a 152-amino-acid chain: MGALNYLSEYFSNHFYVSIRKRKKRKVMQTVNIKVKIDCDGCERKIKNAVSSIKGAKSVEVNRKMHKVTVSGYVDPKKVLKTVQSTGKKKAELWPYVPYTMVAYPYAAGAYDKRAPPGFVRKSEQAQAQPGSTDDKLMSLFSDENPNACTVM.

The HMA domain maps to methionine 28 to alanine 91. The a metal cation site is built by cysteine 39 and cysteine 42. The disordered stretch occupies residues serine 123–methionine 152. The span at serine 142–methionine 152 shows a compositional bias: polar residues. A Cysteine methyl ester modification is found at cysteine 149. Cysteine 149 carries the S-farnesyl cysteine lipid modification. The propeptide at threonine 150–methionine 152 is removed in mature form.

The protein belongs to the HIPP family. Interacts with ZHD11/HB29. Expressed in lateral roots and mature anthers.

It is found in the membrane. Functionally, heavy-metal-binding protein. Binds cadmium. May be involved in cadmium transport and play a role in cadmium detoxification. The protein is Heavy metal-associated isoprenylated plant protein 22 of Arabidopsis thaliana (Mouse-ear cress).